The following is a 36-amino-acid chain: Pancreatic polypeptide (36 aa).

A Tyrosine amide modification is found at Y36.

Belongs to the NPY family.

It is found in the secreted. Its function is as follows. Hormone secreted by pancreatic cells that acts as a regulator of pancreatic and gastrointestinal functions probably by signaling through the G protein-coupled receptor NPY4R2. The chain is Pancreatic polypeptide (PPY) from Didelphis virginiana (North American opossum).